Here is an 800-residue protein sequence, read N- to C-terminus: Isoamylase 2, chloroplastic (800 aa).

A compositionally biased stretch (pro residues) spans 1 to 10 (MASLPAPPTP). The tract at residues 1–22 (MASLPAPPTPLGSCPRGRGGGR) is disordered. The N-terminal 34 residues, 1-34 (MASLPAPPTPLGSCPRGRGGGRVVARPRRAGLAC), are a transit peptide targeting the chloroplast.

This sequence belongs to the glycosyl hydrolase 13 family. As to quaternary structure, forms a hetero-hexamer composed of five ISA1 and one ISA2. As to expression, highly expressed in developing endosperm and leaves.

Its subcellular location is the plastid. It is found in the chloroplast. It catalyses the reaction Hydrolysis of (1-&gt;6)-alpha-D-glucosidic branch linkages in glycogen, amylopectin and their beta-limit dextrins.. Starch-debranching enzyme involved in amylopectin biosynthesis in endosperm. Functions by removing excess branches or improper branches that interfere with the formation of double helices of the cluster chains of amylopectin and crystallization of starch. Works together with ISA1 as heterooligomer. The heterooligomer ISA1 and ISA2 possesses higher affinity than the ISA1 homooligomer for various branched polyglucans in vitro, but no marked differences exist in chain preferences for debranching of amylopectin and phytoglycogen between these forms. The sequence is that of Isoamylase 2, chloroplastic from Oryza sativa subsp. japonica (Rice).